The chain runs to 529 residues: Peptide chain release factor 3 (529 aa).

The tr-type G domain occupies 11-280; that stretch reads AKRRTFAIIS…GLVEWAPAPM (270 aa). GTP-binding positions include 20 to 27, 88 to 92, and 142 to 145; these read SHPDAGKT, DTPGH, and NKLD.

It belongs to the TRAFAC class translation factor GTPase superfamily. Classic translation factor GTPase family. PrfC subfamily.

The protein resides in the cytoplasm. Its function is as follows. Increases the formation of ribosomal termination complexes and stimulates activities of RF-1 and RF-2. It binds guanine nucleotides and has strong preference for UGA stop codons. It may interact directly with the ribosome. The stimulation of RF-1 and RF-2 is significantly reduced by GTP and GDP, but not by GMP. This Shigella sonnei (strain Ss046) protein is Peptide chain release factor 3.